A 185-amino-acid polypeptide reads, in one-letter code: Acireductone dioxygenase (185 aa).

The segment at 1-23 (MSRLSIHPEGNTNATSPAEPLLE) is disordered. The Fe(2+) site is built by His102, His104, Glu108, and His146. 4 residues coordinate Ni(2+): His102, His104, Glu108, and His146.

The protein belongs to the acireductone dioxygenase (ARD) family. As to quaternary structure, monomer. Fe(2+) serves as cofactor. It depends on Ni(2+) as a cofactor.

The enzyme catalyses 1,2-dihydroxy-5-(methylsulfanyl)pent-1-en-3-one + O2 = 3-(methylsulfanyl)propanoate + CO + formate + 2 H(+). The catalysed reaction is 1,2-dihydroxy-5-(methylsulfanyl)pent-1-en-3-one + O2 = 4-methylsulfanyl-2-oxobutanoate + formate + 2 H(+). It functions in the pathway amino-acid biosynthesis; L-methionine biosynthesis via salvage pathway; L-methionine from S-methyl-5-thio-alpha-D-ribose 1-phosphate: step 5/6. Functionally, catalyzes 2 different reactions between oxygen and the acireductone 1,2-dihydroxy-3-keto-5-methylthiopentene (DHK-MTPene) depending upon the metal bound in the active site. Fe-containing acireductone dioxygenase (Fe-ARD) produces formate and 2-keto-4-methylthiobutyrate (KMTB), the alpha-ketoacid precursor of methionine in the methionine recycle pathway. Ni-containing acireductone dioxygenase (Ni-ARD) produces methylthiopropionate, carbon monoxide and formate, and does not lie on the methionine recycle pathway. The protein is Acireductone dioxygenase of Prochlorococcus marinus (strain MIT 9303).